Consider the following 247-residue polypeptide: DNA repair protein RecO (247 aa).

This sequence belongs to the RecO family.

Its function is as follows. Involved in DNA repair and RecF pathway recombination. This is DNA repair protein RecO from Alkalilimnicola ehrlichii (strain ATCC BAA-1101 / DSM 17681 / MLHE-1).